Here is a 400-residue protein sequence, read N- to C-terminus: MIIKPRIRGFICTTTHPVGCEANVLEQINFTKAKGKIANGPKKVLVVGSSSGYGLSSRITAAFGSDAATLGVFFEKPSTETKPGTAGWYNSAAFDKFAKAEGLYSKSINCDAFSHEAKQKAIELIKQDLGQVDMVVYSLASPVRKMPDSGELIRSSLKPIGETYTATAVDTNKDLIIEASVEPATEQEIADTVTVMGGEDWELWMQALSEAGVLSDNCKTVAYSYIGTELTWPIYWHGALGKAKMDLDRAAHALNTKLSVTGGSANVAVLKSVVTQASSAIPVMPLYIAMVFKKMRAEGLHEGCIEQISRMFNERLFKADGTAADVDESNRLRLDDWELREEIQQHCRDMWPQVTTENLAELTDYREYKEEFLKLFGFGVEGIDYEADVNPHVEFDVVSI.

NAD(+) is bound by residues 48–53 (GSSSGY), 74–75 (FE), 111–112 (DA), and 139–140 (LA). Residue Tyr225 coordinates substrate. Residue Tyr235 is the Proton donor of the active site. NAD(+) is bound by residues Lys244 and 273–275 (VVT).

It belongs to the TER reductase family. As to quaternary structure, monomer.

It catalyses the reaction a 2,3-saturated acyl-[ACP] + NAD(+) = a (2E)-enoyl-[ACP] + NADH + H(+). It functions in the pathway lipid metabolism; fatty acid biosynthesis. Functionally, involved in the final reduction of the elongation cycle of fatty acid synthesis (FAS II). Catalyzes the reduction of a carbon-carbon double bond in an enoyl moiety that is covalently linked to an acyl carrier protein (ACP). This Shewanella pealeana (strain ATCC 700345 / ANG-SQ1) protein is Enoyl-[acyl-carrier-protein] reductase [NADH].